Consider the following 365-residue polypeptide: Class I histocompatibility antigen, Gogo-A*0101 alpha chain (365 aa).

Positions 1–24 (MAVMAPRTLVLLLSGALALTQTWA) are cleaved as a signal peptide. The alpha-1 stretch occupies residues 25 to 114 (GSHSMRYFST…LRGYYNQSED (90 aa)). Residues 25 to 308 (GSHSMRYFST…EPSSQPTIPI (284 aa)) lie on the Extracellular side of the membrane. The N-linked (GlcNAc...) asparagine glycan is linked to Asn-110. Positions 115–206 (GSHTIQRMYG…ENGKETLQRT (92 aa)) are alpha-2. Cystine bridges form between Cys-125–Cys-188 and Cys-227–Cys-283. The alpha-3 stretch occupies residues 207-298 (DAPKTHMTHH…GLPEPLTLRW (92 aa)). The Ig-like C1-type domain occupies 209–297 (PKTHMTHHAV…EGLPEPLTLR (89 aa)). The segment at 299–308 (EPSSQPTIPI) is connecting peptide. Residues 309 to 332 (VGIIAGLVLFGAVIAGAVVAAVRW) traverse the membrane as a helical segment. At 333 to 365 (RRKSSDRKGGSYSQAASSDSAQGSDVSLTACKV) the chain is on the cytoplasmic side. The tract at residues 338-365 (DRKGGSYSQAASSDSAQGSDVSLTACKV) is disordered. Positions 342–359 (GSYSQAASSDSAQGSDVS) are enriched in low complexity. Position 343 is a phosphoserine (Ser-343). Residue Tyr-344 is modified to Phosphotyrosine. Ser-345, Ser-349, Ser-350, Ser-352, Ser-356, and Ser-359 each carry phosphoserine.

Belongs to the MHC class I family. In terms of assembly, heterodimer of an alpha chain and a beta chain (beta-2-microglobulin).

It localises to the membrane. Its function is as follows. Involved in the presentation of foreign antigens to the immune system. This Gorilla gorilla gorilla (Western lowland gorilla) protein is Class I histocompatibility antigen, Gogo-A*0101 alpha chain.